Reading from the N-terminus, the 889-residue chain is MEFPHSVLLVVLIIATFAISNLVQAEEDQEGFISLDCGLPPNEVSPYIEPFTGLRFSSDSSFIQSGKIGKVDKSFEATTLKSYMTLRYFPDGKRNCYNLIVKQGKTYMIRATALYGNYDGLNISPKFDLYIGANFWTTLDAGEYLSGVVEEVNYIPRSNSLDVCLVKTDTSTPFLSLLELRPLDNDSYLTGSGSLKTFRRYYLSNSESVIAYPEDVKDRIWEPTFDSEWKQIWTTLKPNNSNGYLVPKNVLMTAAIPANDSAPFRFTEELDSPTDELYVYLHFSEVQSLQANESREFDILWSGEVAYEAFIPEYLNITTIQTNTPVTCPGGKCNLELKRTKNSTHPPLINAIEFYTVVNFPQLETNETDVVAIKDIKATYELNRITWQGDPCVPQKFIWEGLDCNSKDALTLPRITSLNLSSTGLTGNIAAGIQNLTHLDKLDLSNNNLTGGVPEFLASMKSLSFINLSKNNLNGSIPQALLKREKDGLKLSVDEQIRCFPGSCVITKKKFPVMIVALVSSAVVVILVVLVLIFVFKKKKPSNLEDLPPSSNTPRENITSTSISDTSIETKRKRFSYSEVMEMTKNLQRPLGEGGFGVVYHGDINGSSQQVAVKLLSQSSTQGYKEFKAEVELLLRVHHINLVSLVGYCDERDHLALIYEYMSNKDLKHHLSGKHGGSVLKWNTRLQIAVDAALGLEYLHIGCRPSMVHRDVKSTNILLDDQFTAKMADFGLSRSFQLGDESQVSTVVAGTPGYLDPEYYRTGRLAEMSDVYSFGIVLLEIITNQRVIDPAREKSHITEWTAFMLNRGDITRIMDPNLQGDYNSRSVWRALELAMMCANPSSEKRPSMSQVVIELKECIRSENKTQGMDSHSSFEQSMSFDTKAVPSAR.

A signal peptide spans Met-1 to Ala-25. The Extracellular segment spans residues Glu-26–Met-514. Asn-185, Asn-239, Asn-259, Asn-292, Asn-316, Asn-342, Asn-366, Asn-419, Asn-435, Asn-448, Asn-467, and Asn-474 each carry an N-linked (GlcNAc...) asparagine glycan. LRR repeat units follow at residues Arg-414 to Thr-437, His-438 to Met-460, and Ser-462 to Lys-483. A helical transmembrane segment spans residues Ile-515–Val-535. The Cytoplasmic portion of the chain corresponds to Phe-536–Arg-889. A disordered region spans residues Leu-544 to Thr-566. The 290-residue stretch at Lys-585–Phe-874 folds into the Protein kinase domain. ATP is bound by residues Leu-591–Val-599 and Lys-614. Position 659 is a phosphotyrosine (Tyr-659). Asp-711 (proton acceptor) is an active-site residue. A Phosphoserine modification is found at Ser-745. 2 positions are modified to phosphothreonine: Thr-746 and Thr-751. Residue Tyr-759 is modified to Phosphotyrosine. The tract at residues Asn-863–Arg-889 is disordered. Polar residues predominate over residues Lys-864–Phe-880.

It belongs to the protein kinase superfamily. Ser/Thr protein kinase family.

It is found in the cell membrane. It catalyses the reaction L-seryl-[protein] + ATP = O-phospho-L-seryl-[protein] + ADP + H(+). The catalysed reaction is L-threonyl-[protein] + ATP = O-phospho-L-threonyl-[protein] + ADP + H(+). The protein is Putative receptor-like protein kinase At3g46340 of Arabidopsis thaliana (Mouse-ear cress).